The following is a 315-amino-acid chain: Eukaryotic translation initiation factor 2 subunit 1 (315 aa).

The S1 motif domain maps to 17 to 88 (EDVVMVNVRS…EKGYIDLSKR (72 aa)). At serine 49 the chain carries Phosphoserine; by HRI. At serine 52 the chain carries Phosphoserine. Lysine 141 carries the N6-acetyllysine modification. At serine 158 the chain carries Phosphoserine. Phosphothreonine is present on residues threonine 279 and threonine 281. Positions 292 to 315 (RLERENAEVDGDDDAEEMEAKAED) are disordered. Residues 299–308 (EVDGDDDAEE) show a composition bias toward acidic residues.

This sequence belongs to the eIF-2-alpha family. Eukaryotic translation initiation factor 2 eIF2 is a heterotrimeric complex composed of an alpha (EIF2S1), a beta (EIF2S2) and a gamma (EIF2S3) chain. eIF2 is member of the 43S pre-initiation complex (43S PIC). eIF2 forms a complex with at least CELF1/CUGBP1, CALR, CALR3, EIF2S1, EIF2S2, HSP90B1 and HSPA5. Interaction with METAP2 protects EIF2S1 from inhibitory phosphorylation. Interacts with ABCF1. Associates with ribosomes. Interacts with DDX3X in an RNA-independent manner. Phosphorylation at Ser-49 and Ser-52 stabilizes the eIF-2/GDP/eIF2B complex and prevents GDP/GTP exchange reaction, thus impairing the recycling of eIF-2 between successive rounds of initiation and leading to global inhibition of translation, while concomitantly initiating the preferential translation of integrated stress response (ISR)-specific mRNAs. Substrate for at least 4 kinases: EIF2AK1/HRI, EIF2AK2/PKR, EIF2AK3/PERK and EIF2AK4/GCN2. Phosphorylation at Ser-52 by the EIF2AK3/PERK protein kinase occurs in response to the unfolded protein response. Phosphorylation on Ser-52 by the EIF2AK4/GCN2 protein kinase occurs in response to amino acid starvation and UV irradiation. Phosphorylation at Ser-52 by EIF2AK1/HRI in response to mitochondrial damage promotes relocalization to the mitochondrial surface.

Its subcellular location is the cytoplasm. The protein resides in the stress granule. It is found in the cytosol. The protein localises to the mitochondrion. Its activity is regulated as follows. Activity is regulated by phosphorylation at Ser-49 and Ser-52, which stabilizes the eIF2/GDP/eIF2B complex and prevents the eIF2B-mediated exchange of GDP for GTP, thereby preventing the formation of the 43S pre-initiation complex (43S PIC). This results in the global attenuation of 5' cap-dependent protein synthesis and concomitant translation of ISR-specific mRNAs that contain a short upstream open reading frame (uORF) in their 5' UTR, such as ATF4, ATF5, DDIT3/CHOP and PPP1R15A/GADD34. In terms of biological role, member of the eIF2 complex that functions in the early steps of protein synthesis by forming a ternary complex with GTP and initiator tRNA. This complex binds to a 40S ribosomal subunit, followed by mRNA binding to form a 43S pre-initiation complex. Junction of the 60S ribosomal subunit to form the 80S initiation complex is preceded by hydrolysis of the GTP bound to eIF2 and release of an eIF2-GDP binary complex. In order for eIF2 to recycle and catalyze another round of initiation, the GDP bound to eIF2 must exchange with GTP by way of a reaction catalyzed by eIF2B. EIF2S1/eIF2-alpha is a key component of the integrated stress response (ISR), required for adaptation to various stress: phosphorylation by metabolic-stress sensing protein kinases (EIF2AK1/HRI, EIF2AK2/PKR, EIF2AK3/PERK and EIF2AK4/GCN2) in response to stress converts EIF2S1/eIF2-alpha in a global protein synthesis inhibitor, leading to a attenuation of cap-dependent translation, while concomitantly initiating the preferential translation of ISR-specific mRNAs, such as the transcriptional activators ATF4 and QRICH1, and hence allowing ATF4- and QRICH1-mediated reprogramming. EIF2S1/eIF2-alpha also acts as an activator of mitophagy in response to mitochondrial damage: phosphorylation by EIF2AK1/HRI promotes relocalization to the mitochondrial surface, thereby triggering PRKN-independent mitophagy. This is Eukaryotic translation initiation factor 2 subunit 1 (EIF2S1) from Sus scrofa (Pig).